The following is a 428-amino-acid chain: C4-dicarboxylate transport protein (428 aa).

Helical transmembrane passes span 8–28 (SLYFQVLTAIAIGILLGHFYP), 44–64 (LIKMIIAPVIFCTVVTGIAGM), 76–96 (VALLYFEIVSTIALIIGLVIV), 142–162 (IGAFASGNILQVLLFAVLFGF), 184–204 (VIFGIINMIMRLAPIGAFGAM), 222–242 (LIVCFYITCILFVVVVLGSIA), 289–309 (VVGLVIPTGYSFNLDGTSIYL), 326–346 (IFHQITLLVVLLLSSKGAAGV), and 352–372 (IVLAATISAVGHLPVAGLALI).

The protein belongs to the dicarboxylate/amino acid:cation symporter (DAACS) (TC 2.A.23) family.

The protein localises to the cell inner membrane. Functionally, responsible for the transport of dicarboxylates such as succinate, fumarate, and malate from the periplasm across the membrane. The polypeptide is C4-dicarboxylate transport protein (Cronobacter sakazakii (strain ATCC BAA-894) (Enterobacter sakazakii)).